The primary structure comprises 37 residues: Large ribosomal subunit protein bL36 (37 aa).

It belongs to the bacterial ribosomal protein bL36 family.

This Geobacillus kaustophilus (strain HTA426) protein is Large ribosomal subunit protein bL36.